The chain runs to 122 residues: MKKGLIMANHRIDRVGMEIKREVNEILRLRVNDPRVQDVTITDVQMLGDLSMAKVFYTIHSTLASDNQKAQIGLEKATGTIKRELGKNLTMYKIPDLQFVKDESIEYGNKIDEMLRNLDKKD.

This sequence belongs to the RbfA family. In terms of assembly, monomer. Binds 30S ribosomal subunits, but not 50S ribosomal subunits or 70S ribosomes.

Its subcellular location is the cytoplasm. One of several proteins that assist in the late maturation steps of the functional core of the 30S ribosomal subunit. Associates with free 30S ribosomal subunits (but not with 30S subunits that are part of 70S ribosomes or polysomes). Required for efficient processing of 16S rRNA. May interact with the 5'-terminal helix region of 16S rRNA. The polypeptide is Ribosome-binding factor A (Streptococcus agalactiae serotype III (strain NEM316)).